Reading from the N-terminus, the 222-residue chain is Probable transaldolase (222 aa).

K91 functions as the Schiff-base intermediate with substrate in the catalytic mechanism.

The protein belongs to the transaldolase family. Type 3B subfamily.

The protein localises to the cytoplasm. It carries out the reaction D-sedoheptulose 7-phosphate + D-glyceraldehyde 3-phosphate = D-erythrose 4-phosphate + beta-D-fructose 6-phosphate. It functions in the pathway carbohydrate degradation; pentose phosphate pathway; D-glyceraldehyde 3-phosphate and beta-D-fructose 6-phosphate from D-ribose 5-phosphate and D-xylulose 5-phosphate (non-oxidative stage): step 2/3. Its function is as follows. Transaldolase is important for the balance of metabolites in the pentose-phosphate pathway. This is Probable transaldolase from Chlorobium limicola (strain DSM 245 / NBRC 103803 / 6330).